A 389-amino-acid polypeptide reads, in one-letter code: Acetylornithine aminotransferase (389 aa).

Residues 104–105 (GT) and Phe131 each bind pyridoxal 5'-phosphate. Arg134 lines the N(2)-acetyl-L-ornithine pocket. 216–219 (DEVQ) contributes to the pyridoxal 5'-phosphate binding site. An N6-(pyridoxal phosphate)lysine modification is found at Lys245. Ser273 provides a ligand contact to N(2)-acetyl-L-ornithine. Thr274 serves as a coordination point for pyridoxal 5'-phosphate.

Belongs to the class-III pyridoxal-phosphate-dependent aminotransferase family. ArgD subfamily. Homodimer. It depends on pyridoxal 5'-phosphate as a cofactor.

The protein resides in the cytoplasm. It catalyses the reaction N(2)-acetyl-L-ornithine + 2-oxoglutarate = N-acetyl-L-glutamate 5-semialdehyde + L-glutamate. It functions in the pathway amino-acid biosynthesis; L-arginine biosynthesis; N(2)-acetyl-L-ornithine from L-glutamate: step 4/4. This is Acetylornithine aminotransferase from Methanopyrus kandleri (strain AV19 / DSM 6324 / JCM 9639 / NBRC 100938).